A 197-amino-acid polypeptide reads, in one-letter code: Probable UbiX-like flavin prenyltransferase (197 aa).

FMN is bound by residues 9 to 11 (GAT), S36, 87 to 90 (SMKT), and R122.

The protein belongs to the UbiX/PAD1 family. YclB subfamily. In terms of assembly, homododecamer.

The enzyme catalyses dimethylallyl phosphate + FMNH2 = prenylated FMNH2 + phosphate. Functionally, involved in the non-oxidative decarboxylation and detoxification of phenolic derivatives under both aerobic and anaerobic conditions. Flavin prenyltransferase that catalyzes the synthesis of the prenylated FMN cofactor (prenyl-FMN) for phenolic acid decarboxylase. In Escherichia coli O157:H7, this protein is Probable UbiX-like flavin prenyltransferase.